The chain runs to 725 residues: Protein ALEX (725 aa).

Disordered stretches follow at residues 1 to 93, 177 to 226, 256 to 340, 396 to 481, 508 to 528, 584 to 624, and 638 to 675; these read MSPS…ARAQ, GAIA…PLTD, EPPL…PSQP, PILT…SPLL, PMQV…PLGH, LPGL…AASS, and ATRS…GRPR. A compositionally biased stretch (basic residues) spans 41 to 51; that stretch reads HLRRKPCHSRH. Residues 260–276 show a composition bias toward polar residues; sequence GSTTTPLSIWTAPQSQV. Basic and acidic residues-rich tracts occupy residues 297–307 and 314–326; these read QLSEKQPRWKE and RWKE…REGT. Pro residues-rich tracts occupy residues 423–442 and 459–473; these read PSQP…PGQP and RSLP…PRSP. 2 stretches are compositionally biased toward low complexity: residues 584–598 and 643–658; these read LPGL…AAAG and ATQS…EAAS.

It belongs to the ALEX family. Interacts with the N-terminal region of the XLas isoforms of guanine nucleotide-binding protein G(s) subunit alpha.

Its subcellular location is the cell membrane. It is found in the cell projection. It localises to the ruffle. Its function is as follows. May inhibit the adenylyl cyclase-stimulating activity of guanine nucleotide-binding protein G(s) subunit alpha which is produced from the same locus in a different open reading frame. This chain is Protein ALEX, found in Mus musculus (Mouse).